The primary structure comprises 184 residues: ESX-1 secretion-associated protein EspD (184 aa).

Residues 33 to 56 (IGVGSAATPDTGPDLDNAHGQAET) form a disordered region.

The protein localises to the secreted. Functionally, required for ESX-1 function. Required for the maintenance of adequate cellular levels of both EspA and EspC. Facilitates EsxA secretion. This chain is ESX-1 secretion-associated protein EspD, found in Mycobacterium tuberculosis (strain CDC 1551 / Oshkosh).